A 365-amino-acid polypeptide reads, in one-letter code: Protein YIM1 (365 aa).

It belongs to the YIM1 family.

It is found in the lipid droplet. The protein resides in the mitochondrion. The chain is Protein YIM1 (YIM1) from Saccharomyces cerevisiae (strain RM11-1a) (Baker's yeast).